The sequence spans 228 residues: Biosynthetic peptidoglycan transglycosylase (228 aa).

Residues 8–28 (GVAALLALFLLYQLWIFGHIV) form a helical membrane-spanning segment.

This sequence belongs to the glycosyltransferase 51 family.

The protein localises to the cell inner membrane. The catalysed reaction is [GlcNAc-(1-&gt;4)-Mur2Ac(oyl-L-Ala-gamma-D-Glu-L-Lys-D-Ala-D-Ala)](n)-di-trans,octa-cis-undecaprenyl diphosphate + beta-D-GlcNAc-(1-&gt;4)-Mur2Ac(oyl-L-Ala-gamma-D-Glu-L-Lys-D-Ala-D-Ala)-di-trans,octa-cis-undecaprenyl diphosphate = [GlcNAc-(1-&gt;4)-Mur2Ac(oyl-L-Ala-gamma-D-Glu-L-Lys-D-Ala-D-Ala)](n+1)-di-trans,octa-cis-undecaprenyl diphosphate + di-trans,octa-cis-undecaprenyl diphosphate + H(+). The protein operates within cell wall biogenesis; peptidoglycan biosynthesis. Functionally, peptidoglycan polymerase that catalyzes glycan chain elongation from lipid-linked precursors. This is Biosynthetic peptidoglycan transglycosylase from Laribacter hongkongensis (strain HLHK9).